A 296-amino-acid chain; its full sequence is Glycine--tRNA ligase alpha subunit (296 aa).

This sequence belongs to the class-II aminoacyl-tRNA synthetase family. In terms of assembly, tetramer of two alpha and two beta subunits.

The protein resides in the cytoplasm. The catalysed reaction is tRNA(Gly) + glycine + ATP = glycyl-tRNA(Gly) + AMP + diphosphate. The sequence is that of Glycine--tRNA ligase alpha subunit from Francisella tularensis subsp. holarctica (strain FTNF002-00 / FTA).